A 207-amino-acid chain; its full sequence is Cyclic di-AMP synthase CdaS (207 aa).

Positions 13–37 (AFKGKIQVYLEQILGDASLILKTLH) form a coiled coil. The DAC domain occupies 63 to 205 (SFYLQSYIEE…DGVLYPLISP (143 aa)).

Belongs to the adenylate cyclase family. DacB/CdaS subfamily. Forms dimers and probably also hexamers; the dimer may be active while the hexamer may not be active.

It catalyses the reaction 2 ATP = 3',3'-c-di-AMP + 2 diphosphate. Functionally, one of 3 paralogous diadenylate cyclases (DAC) in this bacteria, catalyzing the condensation of 2 ATP molecules into cyclic di-AMP (c-di-AMP). Upon expression in E.coli leads to c-di-AMP synthesis. Overexpression of the hyperactive mutant (L44F) in the absence of c-di-AMP phosphodiesterase GdpP leads to growth defects in log phase (long curly cell filaments) that disappear upon sporulation; spore formation is normal, showing sporulation is insensitive to the excess c-di-AMP. In B.subtilis c-di-AMP is a second messenger that mediates growth, DNA repair and cell wall homeostasis; it is toxic when present in excess. The sequence is that of Cyclic di-AMP synthase CdaS from Bacillus subtilis (strain 168).